Here is a 184-residue protein sequence, read N- to C-terminus: Threonylcarbamoyl-AMP synthase (184 aa).

The YrdC-like domain occupies 3-184 (AWFIQKAVSV…DAATGAILRQ (182 aa)).

It belongs to the SUA5 family. TsaC subfamily.

The protein resides in the cytoplasm. It carries out the reaction L-threonine + hydrogencarbonate + ATP = L-threonylcarbamoyladenylate + diphosphate + H2O. In terms of biological role, required for the formation of a threonylcarbamoyl group on adenosine at position 37 (t(6)A37) in tRNAs that read codons beginning with adenine. Catalyzes the conversion of L-threonine, HCO(3)(-)/CO(2) and ATP to give threonylcarbamoyl-AMP (TC-AMP) as the acyladenylate intermediate, with the release of diphosphate. This is Threonylcarbamoyl-AMP synthase from Hahella chejuensis (strain KCTC 2396).